The following is a 259-amino-acid chain: Aspartate/glutamate leucyltransferase (259 aa).

The protein belongs to the R-transferase family. Bpt subfamily.

It is found in the cytoplasm. It catalyses the reaction N-terminal L-glutamyl-[protein] + L-leucyl-tRNA(Leu) = N-terminal L-leucyl-L-glutamyl-[protein] + tRNA(Leu) + H(+). The catalysed reaction is N-terminal L-aspartyl-[protein] + L-leucyl-tRNA(Leu) = N-terminal L-leucyl-L-aspartyl-[protein] + tRNA(Leu) + H(+). Its function is as follows. Functions in the N-end rule pathway of protein degradation where it conjugates Leu from its aminoacyl-tRNA to the N-termini of proteins containing an N-terminal aspartate or glutamate. This Sinorhizobium medicae (strain WSM419) (Ensifer medicae) protein is Aspartate/glutamate leucyltransferase.